We begin with the raw amino-acid sequence, 68 residues long: Large ribosomal subunit protein eL24 (68 aa).

C7, C10, C33, and C37 together coordinate Zn(2+). The C4-type zinc finger occupies 7–37; sequence CSYCGREFEPGTGKMFVRNDGRVLFFCSSKC.

This sequence belongs to the eukaryotic ribosomal protein eL24 family. In terms of assembly, part of the 50S ribosomal subunit. Forms a cluster with proteins L3 and L14. Zn(2+) is required as a cofactor.

Functionally, binds to the 23S rRNA. The sequence is that of Large ribosomal subunit protein eL24 from Thermococcus onnurineus (strain NA1).